Reading from the N-terminus, the 149-residue chain is Probable microsomal glutathione S-transferase (149 aa).

2 helical membrane passes run 7–27 and 123–143; these read SIFP…IGLW and LSHI…GSSL.

This sequence belongs to the MAPEG family.

The protein localises to the membrane. It catalyses the reaction RX + glutathione = an S-substituted glutathione + a halide anion + H(+). May perform the conjugation of reduced glutathione to electrophiles. In Dictyostelium discoideum (Social amoeba), this protein is Probable microsomal glutathione S-transferase (mgst).